Consider the following 125-residue polypeptide: MSLPKDLLYTEEHEWVKADDGSYVIGITDFAQDQLGDIVFVELPEVGDTVTKGDSIGSIESVKTVSDFYAPVTGKVVAVNETLEDEPELINSNPYDTGWILKLEEVEEADVKALLSSDDYEKVLD.

The 83-residue stretch at 22–104 folds into the Lipoyl-binding domain; the sequence is SYVIGITDFA…YDTGWILKLE (83 aa). At K63 the chain carries N6-lipoyllysine.

Belongs to the GcvH family. In terms of assembly, the glycine cleavage system is composed of four proteins: P, T, L and H. (R)-lipoate serves as cofactor.

Functionally, the glycine cleavage system catalyzes the degradation of glycine. The H protein shuttles the methylamine group of glycine from the P protein to the T protein. Is also involved in protein lipoylation via its role as an octanoyl/lipoyl carrier protein intermediate. This is Glycine cleavage system H protein from Listeria monocytogenes serotype 4a (strain HCC23).